The primary structure comprises 154 residues: Ribonuclease H (154 aa).

The RNase H type-1 domain maps to 1–142 (MRKQIEIFTD…CDELAKQGAE (142 aa)). Mg(2+)-binding residues include aspartate 10, glutamate 48, aspartate 70, and aspartate 134.

Belongs to the RNase H family. Monomer. Requires Mg(2+) as cofactor.

Its subcellular location is the cytoplasm. The enzyme catalyses Endonucleolytic cleavage to 5'-phosphomonoester.. Its function is as follows. Endonuclease that specifically degrades the RNA of RNA-DNA hybrids. The chain is Ribonuclease H from Actinobacillus succinogenes (strain ATCC 55618 / DSM 22257 / CCUG 43843 / 130Z).